The following is a 597-amino-acid chain: DNA mismatch repair protein MutL (597 aa).

Belongs to the DNA mismatch repair MutL/HexB family.

This protein is involved in the repair of mismatches in DNA. It is required for dam-dependent methyl-directed DNA mismatch repair. May act as a 'molecular matchmaker', a protein that promotes the formation of a stable complex between two or more DNA-binding proteins in an ATP-dependent manner without itself being part of a final effector complex. This Rhodopseudomonas palustris (strain HaA2) protein is DNA mismatch repair protein MutL.